The chain runs to 273 residues: 2,3,4,5-tetrahydropyridine-2,6-dicarboxylate N-succinyltransferase (273 aa).

Positions 104 and 141 each coordinate substrate.

Belongs to the transferase hexapeptide repeat family. In terms of assembly, homotrimer.

It is found in the cytoplasm. It catalyses the reaction (S)-2,3,4,5-tetrahydrodipicolinate + succinyl-CoA + H2O = (S)-2-succinylamino-6-oxoheptanedioate + CoA. The protein operates within amino-acid biosynthesis; L-lysine biosynthesis via DAP pathway; LL-2,6-diaminopimelate from (S)-tetrahydrodipicolinate (succinylase route): step 1/3. In Psychrobacter cryohalolentis (strain ATCC BAA-1226 / DSM 17306 / VKM B-2378 / K5), this protein is 2,3,4,5-tetrahydropyridine-2,6-dicarboxylate N-succinyltransferase.